The sequence spans 262 residues: 3-methyl-2-oxobutanoate hydroxymethyltransferase (262 aa).

Mg(2+)-binding residues include aspartate 43 and aspartate 82. 3-methyl-2-oxobutanoate is bound by residues 43–44 (DS), aspartate 82, and lysine 111. Glutamate 113 serves as a coordination point for Mg(2+). Residue glutamate 180 is the Proton acceptor of the active site.

This sequence belongs to the PanB family. Homodecamer; pentamer of dimers. Mg(2+) serves as cofactor.

Its subcellular location is the cytoplasm. It catalyses the reaction 3-methyl-2-oxobutanoate + (6R)-5,10-methylene-5,6,7,8-tetrahydrofolate + H2O = 2-dehydropantoate + (6S)-5,6,7,8-tetrahydrofolate. Its pathway is cofactor biosynthesis; coenzyme A biosynthesis. Catalyzes the reversible reaction in which hydroxymethyl group from 5,10-methylenetetrahydrofolate is transferred onto alpha-ketoisovalerate to form ketopantoate. This chain is 3-methyl-2-oxobutanoate hydroxymethyltransferase, found in Pyrobaculum aerophilum (strain ATCC 51768 / DSM 7523 / JCM 9630 / CIP 104966 / NBRC 100827 / IM2).